Here is a 901-residue protein sequence, read N- to C-terminus: Protein translocase subunit SecA (901 aa).

Residues Q85, 103 to 107, and D510 each bind ATP; that span reads GEGKT. A disordered region spans residues 848–901; that stretch reads RINQNNLPVDENSQTTQNSETEDYSDRRIGRNEPCPCGSGKKYKHCHGSRVARQ. A compositionally biased stretch (polar residues) spans 849-866; sequence INQNNLPVDENSQTTQNS. Residues C882, C884, C893, and H894 each contribute to the Zn(2+) site. A compositionally biased stretch (basic residues) spans 888-901; the sequence is KKYKHCHGSRVARQ.

Belongs to the SecA family. As to quaternary structure, monomer and homodimer. Part of the essential Sec protein translocation apparatus which comprises SecA, SecYEG and auxiliary proteins SecDF-YajC and YidC. Zn(2+) is required as a cofactor.

Its subcellular location is the cell inner membrane. The protein localises to the cytoplasm. It carries out the reaction ATP + H2O + cellular proteinSide 1 = ADP + phosphate + cellular proteinSide 2.. Part of the Sec protein translocase complex. Interacts with the SecYEG preprotein conducting channel. Has a central role in coupling the hydrolysis of ATP to the transfer of proteins into and across the cell membrane, serving both as a receptor for the preprotein-SecB complex and as an ATP-driven molecular motor driving the stepwise translocation of polypeptide chains across the membrane. In Haemophilus influenzae (strain 86-028NP), this protein is Protein translocase subunit SecA.